Consider the following 162-residue polypeptide: Interleukin-15 (162 aa).

The first 29 residues, 1–29, serve as a signal peptide directing secretion; the sequence is MRILKPYLRSTSIQCYLCLLLNSHFLTEA. The propeptide occupies 30–48; that stretch reads CIPVFILSCINAGLPKTEA. Cystine bridges form between C83-C133 and C90-C136. Residues N104 and N127 are each glycosylated (N-linked (GlcNAc...) asparagine).

This sequence belongs to the IL-15/IL-21 family.

It localises to the secreted. Its function is as follows. Cytokine that plays a major role in the development of inflammatory and protective immune responses to microbial invaders and parasites by modulating immune cells of both the innate and adaptive immune systems. Stimulates the proliferation of natural killer cells, T-cells and B-cells and promotes the secretion of several cytokines. In monocytes, induces the production of IL8 and monocyte chemotactic protein 1/CCL2, two chemokines that attract neutrophils and monocytes respectively to sites of infection. Unlike most cytokines, which are secreted in soluble form, IL15 is expressed in association with its high affinity IL15RA on the surface of IL15-producing cells and delivers signals to target cells that express IL2RB and IL2RG receptor subunits. Binding to its receptor triggers the phosphorylation of JAK1 and JAK3 and the recruitment and subsequent phosphorylation of signal transducer and activator of transcription-3/STAT3 and STAT5. In mast cells, induces the rapid tyrosine phosphorylation of STAT6 and thereby controls mast cell survival and release of cytokines such as IL4. The polypeptide is Interleukin-15 (IL15) (Felis catus (Cat)).